A 605-amino-acid chain; its full sequence is Zinc metalloproteinase-disintegrin-like BfMP (605 aa).

The first 11 residues, 1-11, serve as a signal peptide directing secretion; the sequence is MLVVFPYQGSS. The propeptide occupies 12-179; it reads IILESGNVND…WESDEPFKNT (168 aa). 2 N-linked (GlcNAc...) asparagine glycosylation sites follow: Asn178 and Asn215. In terms of domain architecture, Peptidase M12B spans 196–392; it reads KYIEFYVAVD…DRPQCILNKP (197 aa). Cystine bridges form between Cys307–Cys387, Cys347–Cys371, Cys350–Cys355, Cys403–Cys432, Cys414–Cys427, Cys416–Cys422, Cys426–Cys449, Cys440–Cys446, Cys445–Cys471, Cys458–Cys478, Cys465–Cys497, Cys490–Cys502, Cys509–Cys559, Cys524–Cys567, Cys537–Cys547, Cys554–Cys593, and Cys587–Cys598. Position 332 (His332) interacts with Zn(2+). The active site involves Glu333. Positions 336 and 342 each coordinate Zn(2+). Positions 400–486 constitute a Disintegrin domain; that stretch reads PAICGNYFVE…ECPTDIFRRN (87 aa). Residues 464 to 466 carry the D/ECD-tripeptide motif; it reads DCD.

It belongs to the venom metalloproteinase (M12B) family. P-III subfamily. P-IIIa sub-subfamily. In terms of assembly, monomer. The cofactor is Zn(2+). As to expression, expressed by the venom gland.

The protein resides in the secreted. Snake venom zinc metalloproteinase that inhibits platelet aggregation and degrades fibrinogen. In Bungarus fasciatus (Banded krait), this protein is Zinc metalloproteinase-disintegrin-like BfMP.